A 98-amino-acid polypeptide reads, in one-letter code: NADH-ubiquinone oxidoreductase chain 4L (98 aa).

3 helical membrane passes run 1–21, 29–49, and 61–81; these read MSMV…GLLM, SLLC…ATIL, and IILL…LVTV.

The protein belongs to the complex I subunit 4L family. Core subunit of respiratory chain NADH dehydrogenase (Complex I) which is composed of 45 different subunits.

It localises to the mitochondrion inner membrane. The enzyme catalyses a ubiquinone + NADH + 5 H(+)(in) = a ubiquinol + NAD(+) + 4 H(+)(out). Its function is as follows. Core subunit of the mitochondrial membrane respiratory chain NADH dehydrogenase (Complex I) which catalyzes electron transfer from NADH through the respiratory chain, using ubiquinone as an electron acceptor. Part of the enzyme membrane arm which is embedded in the lipid bilayer and involved in proton translocation. This is NADH-ubiquinone oxidoreductase chain 4L (MT-ND4L) from Pusa caspica (Caspian seal).